A 150-amino-acid chain; its full sequence is Phosphopantetheine adenylyltransferase (150 aa).

T15 lines the substrate pocket. Residues 15 to 16 and H23 contribute to the ATP site; that span reads TF. Substrate is bound by residues I80 and R94. ATP-binding positions include 95–97, E105, and 130–136; these read GIR and LENISSR.

It belongs to the bacterial CoaD family. Homohexamer. It depends on Mg(2+) as a cofactor.

The protein localises to the cytoplasm. The enzyme catalyses (R)-4'-phosphopantetheine + ATP + H(+) = 3'-dephospho-CoA + diphosphate. The protein operates within cofactor biosynthesis; coenzyme A biosynthesis; CoA from (R)-pantothenate: step 4/5. Functionally, reversibly transfers an adenylyl group from ATP to 4'-phosphopantetheine, yielding dephospho-CoA (dPCoA) and pyrophosphate. The protein is Phosphopantetheine adenylyltransferase of Malacoplasma penetrans (strain HF-2) (Mycoplasma penetrans).